A 233-amino-acid polypeptide reads, in one-letter code: Small ribosomal subunit protein uS2 (233 aa).

It belongs to the universal ribosomal protein uS2 family.

This Clostridium perfringens (strain ATCC 13124 / DSM 756 / JCM 1290 / NCIMB 6125 / NCTC 8237 / Type A) protein is Small ribosomal subunit protein uS2.